A 148-amino-acid chain; its full sequence is Snaclec B2 (148 aa).

Residues 1–24 (MGRLISVSFGLLVVFLSLSGTGAA) form the signal peptide. Disulfide bonds link C27–C38, C55–C144, and C121–C136. The C-type lectin domain occupies 34-145 (YDQHCYKVFD…CRLLGHFVCK (112 aa)).

It belongs to the snaclec family. In terms of assembly, heterodimer; disulfide-linked. In terms of tissue distribution, expressed by the venom gland.

Its subcellular location is the secreted. In terms of biological role, interferes with one step of hemostasis (modulation of platelet aggregation, or coagulation cascade, for example). This chain is Snaclec B2, found in Macrovipera lebetinus (Levantine viper).